Consider the following 611-residue polypeptide: UPF0508 protein SCY_3114 (611 aa).

Belongs to the UPF0508 family.

This chain is UPF0508 protein SCY_3114, found in Saccharomyces cerevisiae (strain YJM789) (Baker's yeast).